The sequence spans 181 residues: Adenylate kinase (181 aa).

10 to 15 (GAGKGT) serves as a coordination point for ATP. Residues 30 to 59 (STGDLFRANIGEGTPLGKEAKSYIDAGKLV) are NMP. Residues Thr-31, Arg-36, 57–59 (KLV), 85–88 (GFPR), and Gln-92 contribute to the AMP site. Residues 126–132 (ARGRADD) form an LID region. Arg-127 is an ATP binding site. Residues Arg-129 and Arg-140 each contribute to the AMP site. Residue Gly-166 coordinates ATP.

This sequence belongs to the adenylate kinase family. As to quaternary structure, monomer.

The protein localises to the cytoplasm. The enzyme catalyses AMP + ATP = 2 ADP. It functions in the pathway purine metabolism; AMP biosynthesis via salvage pathway; AMP from ADP: step 1/1. Its function is as follows. Catalyzes the reversible transfer of the terminal phosphate group between ATP and AMP. Plays an important role in cellular energy homeostasis and in adenine nucleotide metabolism. This Corynebacterium diphtheriae (strain ATCC 700971 / NCTC 13129 / Biotype gravis) protein is Adenylate kinase.